The chain runs to 315 residues: MVVSLAGRDVLCLQDFTREELETILKTAEMMKIWNKIGKPHRVLEGKTLAMIFQKPSTRTRISFEVGIYQLGGYGLYLNAQDLQLRRGETIADTARVLSRYVDGIMARVFDHKDVEDLAKYASVPVINGLSDFSHPCQALADYQTILEKKGRIQGLKIVYVGDGNNVAHSLMIAGTKLGANVVVATPEGYEPDPKVIKWAEQNAAESGGSFELLHDPVQAVKDADVIYTDVWASMGQEAEAEERRKIFMPFQVNKELVKHAKPDYIFMHCLPAHRGEEVTDDVIDSPNSVVFDQAENRLHAQKAVMALVMGGIKV.

Carbamoyl phosphate-binding positions include 57 to 60 (STRT), Gln84, Arg108, and 135 to 138 (HPCQ). L-ornithine contacts are provided by residues Asn166, Asp230, and 234-235 (SM). Residues 270-271 (CL) and Arg298 each bind carbamoyl phosphate.

The protein belongs to the aspartate/ornithine carbamoyltransferase superfamily. OTCase family.

It localises to the cytoplasm. The enzyme catalyses carbamoyl phosphate + L-ornithine = L-citrulline + phosphate + H(+). It functions in the pathway amino-acid biosynthesis; L-arginine biosynthesis; L-arginine from L-ornithine and carbamoyl phosphate: step 1/3. Reversibly catalyzes the transfer of the carbamoyl group from carbamoyl phosphate (CP) to the N(epsilon) atom of ornithine (ORN) to produce L-citrulline. The sequence is that of Ornithine carbamoyltransferase from Thermococcus kodakarensis (strain ATCC BAA-918 / JCM 12380 / KOD1) (Pyrococcus kodakaraensis (strain KOD1)).